A 268-amino-acid polypeptide reads, in one-letter code: Undecaprenyl-diphosphatase (268 aa).

The next 8 helical transmembrane spans lie at 8–28 (VILGIIEGVTEFLPVSSTGHL), 41–61 (AFWDSFTVLIQLGAILAIVGL), 83–103 (FVIGVLVAFLPAVVVGLVAGK), 108–128 (VLFNPWVVCFTLIVGGAILLW), 144–164 (FPLLMYLYIGIAQCVAMIPGV), 184–204 (AAEFSFFLAIPTMIGAFAYDF), 218–238 (IVAIGFVVSFITAVIVVKTFL), and 246–266 (FVVFAWWRVIVGTLGLIALAL).

Belongs to the UppP family.

The protein localises to the cell inner membrane. The enzyme catalyses di-trans,octa-cis-undecaprenyl diphosphate + H2O = di-trans,octa-cis-undecaprenyl phosphate + phosphate + H(+). Catalyzes the dephosphorylation of undecaprenyl diphosphate (UPP). Confers resistance to bacitracin. This is Undecaprenyl-diphosphatase from Bradyrhizobium diazoefficiens (strain JCM 10833 / BCRC 13528 / IAM 13628 / NBRC 14792 / USDA 110).